The chain runs to 598 residues: F-box/WD repeat-containing protein 8 (598 aa).

At methionine 1 the chain carries N-acetylmethionine. The interval 17-93 (LAQAQAPKKR…RSPLAREGAG (77 aa)) is disordered. Residues 29–40 (PEAAERRARRPE) show a composition bias toward basic and acidic residues. Over residues 61-71 (EGAGRPPAARA) the composition is skewed to low complexity. Phosphoserine occurs at positions 83 and 85. Residues 113–159 (PFFDIQLPYELAINIFQYLDRKELGRCAQVSKTWKVIAEDEVLWYRL) form the F-box domain. WD repeat units lie at residues 201–250 (AVSE…LESE), 259–299 (QPNV…FEHD), 300–340 (ARIQ…AEFE), 341–383 (VPKL…LLYA), 384–429 (HGPP…LKLG), 430–475 (NVLR…SAHQ), 476–513 (LRVS…EVYS), and 514–561 (GHPV…AYEF).

Component of the Cul7-RING(FBXW8) complex consisting of CUL7, RBX1, SKP1 and FBXW8; within the complex interacts with CUL7 and SKP1. Interacts with GLMN isoform 1. Interacts with OBSL1, CUL1, CUL2, CCT6B, PFDN5, CCT2, CCT3, CCT6A, CCT7, VBP1, CCDC8, ARF1, TRIP13, PDCD5 and GORASP1. Interacts with MAP4K1/HPK1 (when autophosphorylated). Associated component of the 3M complex. Interacts with POUF51 (when phosphorylated on 'Ser-355'). Post-translationally, phosphorylation at Ser-85 by mTORC2 promotes FBXW8 stabilization, allowing its translocation to the cytosol in response to insulin.

It localises to the cytoplasm. Its subcellular location is the perinuclear region. It is found in the golgi apparatus. The protein operates within protein modification; protein ubiquitination. Functionally, substrate-recognition component of the Cul7-RING(FBXW8) ubiquitin ligase complex, which mediates the ubiquitination and subsequent proteasomal degradation of target proteins. The Cul7-RING(FBXW8) complex mediates ubiquitination and consequent degradation of GORASP1, acting as a component of the ubiquitin ligase pathway that regulates Golgi morphogenesis and dendrite patterning in brain. Mediates ubiquitination and degradation of IRS1 in a mTOR-dependent manner: the Cul7-RING(FBXW8) complex recognizes and binds IRS1 previously phosphorylated by S6 kinase (RPS6KB1 or RPS6KB2). The Cul7-RING(FBXW8) complex also mediates ubiquitination of MAP4K1/HPK1: recognizes and binds autophosphorylated MAP4K1/HPK1, leading to its degradation, thereby affecting cell proliferation and differentiation. The Cul7-RING(FBXW8) complex also mediates ubiquitination of phosphorylated cyclin-D1 (CCND1). The Cul7-RING(FBXW8) complex is however not a major regulator of CCND1 stability during the G1/S transition. Associated component of the 3M complex, suggesting that it mediates some of 3M complex functions. The chain is F-box/WD repeat-containing protein 8 from Homo sapiens (Human).